Consider the following 519-residue polypeptide: Bud site selection protein 22 (519 aa).

Residues 241 to 497 (EKTANANQTH…STGEEHPSWI (257 aa)) are disordered. The span at 244–254 (ANANQTHSNID) shows a compositional bias: polar residues. The residue at position 257 (T257) is a Phosphothreonine. Positions 267-282 (DSKSNAIGAQTQSNKE) are enriched in polar residues. Residues 321 to 337 (VTDEEPSEASSDEDDSD) show a composition bias toward acidic residues. Residues 338–348 (ERFSDSEENEP) show a composition bias toward basic and acidic residues. Position 367 is a phosphoserine (S367). T371 is modified (phosphothreonine). Phosphoserine is present on S375. The segment covering 407–420 (RKNRRGQRARRKIW) has biased composition (basic residues). Residues 426-470 (SQAKHVQRELEKEMEDRKQRQIEYEARVAKREAKAASLEASRSRE) adopt a coiled-coil conformation. 2 stretches are compositionally biased toward basic and acidic residues: residues 431–459 (VQRE…REAK) and 466–497 (SRSR…PSWI).

The protein belongs to the BUD22 family.

The protein resides in the nucleus. Its function is as follows. Involved in positioning the proximal bud pole signal. This is Bud site selection protein 22 (BUD22) from Saccharomyces cerevisiae (strain ATCC 204508 / S288c) (Baker's yeast).